A 138-amino-acid chain; its full sequence is Large ribosomal subunit protein uL16 (138 aa).

This sequence belongs to the universal ribosomal protein uL16 family. As to quaternary structure, part of the 50S ribosomal subunit.

Functionally, binds 23S rRNA and is also seen to make contacts with the A and possibly P site tRNAs. The chain is Large ribosomal subunit protein uL16 from Anaeromyxobacter dehalogenans (strain 2CP-C).